We begin with the raw amino-acid sequence, 131 residues long: D-ribose pyranase (131 aa).

The active-site Proton donor is histidine 20. Residues aspartate 28, histidine 98, and 120-122 (YAN) contribute to the substrate site.

The protein belongs to the RbsD / FucU family. RbsD subfamily. In terms of assembly, homodecamer.

It localises to the cytoplasm. It catalyses the reaction beta-D-ribopyranose = beta-D-ribofuranose. It participates in carbohydrate metabolism; D-ribose degradation; D-ribose 5-phosphate from beta-D-ribopyranose: step 1/2. In terms of biological role, catalyzes the interconversion of beta-pyran and beta-furan forms of D-ribose. The polypeptide is D-ribose pyranase (Bacillus thuringiensis (strain Al Hakam)).